Here is a 164-residue protein sequence, read N- to C-terminus: B-phycoerythrin alpha chain (164 aa).

The (2R,3E)-phycoerythrobilin site is built by C82 and C139.

The protein belongs to the phycobiliprotein family. As to quaternary structure, heteromer of 6 alpha, 6 beta and one gamma chain. In terms of processing, contains two covalently linked bilin chromophores.

The protein resides in the plastid. The protein localises to the chloroplast thylakoid membrane. Functionally, light-harvesting photosynthetic bile pigment-protein from the phycobiliprotein complex. This is B-phycoerythrin alpha chain (cpeA) from Porphyridium purpureum (Red alga).